Reading from the N-terminus, the 174-residue chain is Pediocin PA-1 biosynthesis protein PedC (174 aa).

Its function is as follows. Probably involved in pediocin PA-1 biosynthesis. The sequence is that of Pediocin PA-1 biosynthesis protein PedC (pedC) from Pediococcus acidilactici.